Reading from the N-terminus, the 1941-residue chain is Xin actin-binding repeat-containing protein 1 (1941 aa).

The segment at 1-41 (MAEPQKSSKVAIKKMEDDLPPPPIPDSIQVIAPASQDPNPL) is disordered. Xin repeat units lie at residues 108 to 123 (GEVQSMRWIFENWALD), 143 to 158 (GDVKSTSLRFENQSVN), 176 to 191 (GDVHTARWLFETQPLD), 215 to 230 (GDVKGAKELFEAQSLD), 255 to 270 (GDVKKTIRLFQTEPLC), 293 to 308 (NAVRTARWLFETQPLD), 331 to 346 (PDVSGARWIFETQPLD), 368 to 383 (ADVTKQRLLFGTQALD), 402 to 417 (GDVKSTLWLFETQPME), 439 to 454 (GDVKQRKHVFETCPLG), 475 to 490 (GDVKSFKTLFETLPLD), 510 to 525 (GNVKANQILFETTPLY), 548 to 563 (GDVKKYKWMFETRPLD), 586 to 601 (GDVRTAKWLFETQPMD), 624 to 639 (GDVKTCRWLFETQPMH), 658 to 673 (ADVKSYTWMFETQPLD), 697 to 712 (VDVKTVRHLFETEPLG), 736 to 751 (GEVSRVKEFFEAKPLD), 769 to 784 (GSVHKFTWLFENYPMD), 805 to 820 (GDVGGKRFIFETYSLD), 842 to 857 (ANVKSCTMLFESQPLY), 880 to 895 (GDVKGARWLFETKPLD), 917 to 932 (GDVQAARWRFETEPLD), 951 to 966 (GDVQSNKQLFESQQVG), 982 to 997 (GDVRTSTWLFENQPVD), 1020 to 1035 (GDVKRCTWLFETQPMD), and 1055 to 1070 (ADVKSTTWLFESTPLD). A compositionally biased stretch (polar residues) spans 1514–1565 (ASKQETKTLQSTIHQQESASTMRENTSTAIRTSTTRVQEASRTHTSVSQKSI). Disordered regions lie at residues 1514 to 1568 (ASKQ…IASH), 1715 to 1856 (ASGS…PPPA), and 1914 to 1941 (YKARKGGQGKFELDRAKPSKPVKNGEVG). Over residues 1820–1833 (SASTNNSTNRSTKS) the composition is skewed to low complexity. A compositionally biased stretch (pro residues) spans 1834-1843 (VPPPVPPKPP).

The protein belongs to the Xin family. As to expression, expressed at intercalated disks in the heart (at protein level).

The protein localises to the cell junction. It is found in the adherens junction. Its subcellular location is the desmosome. Functionally, involved in cardiac morphogenesis, including heart midline formation, cardiac tubule looping, myocardial formation and maintenance of heart beat speed and rhythm. May protect actin filaments from depolymerization. May play a role in development of normal skeletal muscle morphology, muscle fiber type composition and regulation of muscle satellite cell activation and survival. This chain is Xin actin-binding repeat-containing protein 1, found in Gallus gallus (Chicken).